Consider the following 286-residue polypeptide: Bifunctional protein FolD (286 aa).

Residues 163–165 (GMS), I188, and I229 each bind NADP(+).

Belongs to the tetrahydrofolate dehydrogenase/cyclohydrolase family. In terms of assembly, homodimer.

The enzyme catalyses (6R)-5,10-methylene-5,6,7,8-tetrahydrofolate + NADP(+) = (6R)-5,10-methenyltetrahydrofolate + NADPH. It catalyses the reaction (6R)-5,10-methenyltetrahydrofolate + H2O = (6R)-10-formyltetrahydrofolate + H(+). It participates in one-carbon metabolism; tetrahydrofolate interconversion. Its function is as follows. Catalyzes the oxidation of 5,10-methylenetetrahydrofolate to 5,10-methenyltetrahydrofolate and then the hydrolysis of 5,10-methenyltetrahydrofolate to 10-formyltetrahydrofolate. This Helicobacter hepaticus (strain ATCC 51449 / 3B1) protein is Bifunctional protein FolD.